The primary structure comprises 301 residues: Lipoyl synthase (301 aa).

Residues Cys-53, Cys-58, Cys-64, Cys-79, Cys-83, Cys-86, and Ser-290 each contribute to the [4Fe-4S] cluster site. The region spanning 65–279 (WSRKTATYML…RIYGKSIGFK (215 aa)) is the Radical SAM core domain.

Belongs to the radical SAM superfamily. Lipoyl synthase family. It depends on [4Fe-4S] cluster as a cofactor.

It localises to the cytoplasm. It carries out the reaction [[Fe-S] cluster scaffold protein carrying a second [4Fe-4S](2+) cluster] + N(6)-octanoyl-L-lysyl-[protein] + 2 oxidized [2Fe-2S]-[ferredoxin] + 2 S-adenosyl-L-methionine + 4 H(+) = [[Fe-S] cluster scaffold protein] + N(6)-[(R)-dihydrolipoyl]-L-lysyl-[protein] + 4 Fe(3+) + 2 hydrogen sulfide + 2 5'-deoxyadenosine + 2 L-methionine + 2 reduced [2Fe-2S]-[ferredoxin]. Its pathway is protein modification; protein lipoylation via endogenous pathway; protein N(6)-(lipoyl)lysine from octanoyl-[acyl-carrier-protein]: step 2/2. In terms of biological role, catalyzes the radical-mediated insertion of two sulfur atoms into the C-6 and C-8 positions of the octanoyl moiety bound to the lipoyl domains of lipoate-dependent enzymes, thereby converting the octanoylated domains into lipoylated derivatives. This chain is Lipoyl synthase, found in Leptospira interrogans serogroup Icterohaemorrhagiae serovar Lai (strain 56601).